Here is a 364-residue protein sequence, read N- to C-terminus: Formimidoylglutamase (364 aa).

Mn(2+) contacts are provided by His-133, Asp-189, His-191, Asp-193, Asp-286, and Asp-288.

The protein belongs to the arginase family. Mn(2+) serves as cofactor.

The catalysed reaction is N-formimidoyl-L-glutamate + H2O = formamide + L-glutamate. It participates in amino-acid degradation; L-histidine degradation into L-glutamate; L-glutamate from N-formimidoyl-L-glutamate (hydrolase route): step 1/1. In terms of biological role, catalyzes the conversion of N-formimidoyl-L-glutamate to L-glutamate and formamide. This is Formimidoylglutamase from Photobacterium profundum (strain SS9).